Reading from the N-terminus, the 431-residue chain is Levansucrase LscB (431 aa).

Sucrose-binding residues include Trp61, Asp62, Ala148, Arg218, and Asp219. Asp62 acts as the Nucleophile in catalysis. Glu303 functions as the Proton donor/acceptor in the catalytic mechanism.

It belongs to the glycosyl hydrolase 68 family.

The protein resides in the secreted. The enzyme catalyses [6)-beta-D-fructofuranosyl-(2-&gt;](n) alpha-D-glucopyranoside + sucrose = [6)-beta-D-fructofuranosyl-(2-&gt;](n+1) alpha-D-glucopyranoside + D-glucose. Its function is as follows. Catalyzes the synthesis of levan, a fructose polymer, by transferring the fructosyl moiety from sucrose to a growing acceptor molecule. In Pseudomonas savastanoi pv. glycinea (Pseudomonas syringae pv. glycinea), this protein is Levansucrase LscB.